The primary structure comprises 347 residues: Cannabinoid receptor 2 (347 aa).

Residues 1–33 are Extracellular-facing; the sequence is MEGCRETEVTNGSNGGLEFNPMKEYMILSSGQQ. Residue asparagine 11 is glycosylated (N-linked (GlcNAc...) asparagine). The helical transmembrane segment at 34–59 threads the bilayer; that stretch reads IAVAVLCTLMGLLSALENMAVLYIIL. Residues 60 to 71 lie on the Cytoplasmic side of the membrane; sequence SSRRLRRKPSYL. Residues 72 to 92 form a helical membrane-spanning segment; it reads FISSLAGADFLASVIFACNFV. At 93 to 104 the chain is on the extracellular side; it reads IFHVFHGVDSNA. A helical transmembrane segment spans residues 105 to 129; it reads IFLLKIGSVTMTFTASVGSLLLTAV. The Cytoplasmic portion of the chain corresponds to 130–149; sequence DRYLCLCYPPTYKALVTRGR. Residues 150 to 172 traverse the membrane as a helical segment; that stretch reads ALVALCVMWVLSALISYLPLMGW. The Extracellular portion of the chain corresponds to 173-188; the sequence is TCCPSPCSELFPLIPN. The helical transmembrane segment at 189-214 threads the bilayer; it reads DYLLGWLLFIAILFSGIIYTYGYVLW. Over 215 to 246 the chain is Cytoplasmic; that stretch reads KAHRHVATLAEHQDRQVPGIARMRLDVRLAKT. The chain crosses the membrane as a helical span at residues 247-267; that stretch reads LGLVLAVLLICWFPALALMGH. Over 268 to 279 the chain is Extracellular; that stretch reads SLVTTLSDQVKE. A helical membrane pass occupies residues 280-301; sequence AFAFCSMLCLVNSMVNPIIYAL. Over 302–347 the chain is Cytoplasmic; sequence RSGEIRSAAQHCLIGWKKYLQGLGPEGKEEGPRSSVTETEADVKTT. Residues 326–347 form a disordered region; that stretch reads PEGKEEGPRSSVTETEADVKTT. Residues serine 335 and serine 336 each carry the phosphoserine modification. Position 338 is a phosphothreonine (threonine 338).

The protein belongs to the G-protein coupled receptor 1 family. Expressed by cells of hematopoietic origin. Expressed in skin in suprabasal layers and hair follicles, in brain by neurons and glial cells and by osteoblasts, osteocytes, osteoclasts (at protein level).

The protein resides in the cell membrane. The protein localises to the cell projection. Its subcellular location is the dendrite. It is found in the perikaryon. Its function is as follows. Heterotrimeric G protein-coupled receptor for endocannabinoid 2-arachidonoylglycerol mediating inhibition of adenylate cyclase. May function in inflammatory response, nociceptive transmission and bone homeostasis. This is Cannabinoid receptor 2 (Cnr2) from Mus musculus (Mouse).